Here is a 35-residue protein sequence, read N- to C-terminus: Photosystem II reaction center protein T (35 aa).

A helical membrane pass occupies residues 3–23; it reads ALVYTFLLVSTLGIIFFAIFF.

Belongs to the PsbT family. In terms of assembly, PSII is composed of 1 copy each of membrane proteins PsbA, PsbB, PsbC, PsbD, PsbE, PsbF, PsbH, PsbI, PsbJ, PsbK, PsbL, PsbM, PsbT, PsbY, PsbZ, Psb30/Ycf12, at least 3 peripheral proteins of the oxygen-evolving complex and a large number of cofactors. It forms dimeric complexes.

The protein localises to the plastid. Its subcellular location is the chloroplast thylakoid membrane. In terms of biological role, found at the monomer-monomer interface of the photosystem II (PS II) dimer, plays a role in assembly and dimerization of PSII. PSII is a light-driven water plastoquinone oxidoreductase, using light energy to abstract electrons from H(2)O, generating a proton gradient subsequently used for ATP formation. The sequence is that of Photosystem II reaction center protein T from Taxus brevifolia (Pacific yew).